We begin with the raw amino-acid sequence, 57 residues long: MIQSPTSFLIVLILLWCKLVLSCFIECLVALQQLIHVLLQIINSNLQSRLLLWHSLD.

Residues 1–22 form the signal peptide; sequence MIQSPTSFLIVLILLWCKLVLS.

Involved in resistance to IFN. The chain is Non-structural protein 3a from Avian infectious bronchitis virus (strain Portugal/322/82) (IBV).